A 100-amino-acid chain; its full sequence is Urease subunit gamma (100 aa).

It belongs to the urease gamma subunit family. Heterotrimer of UreA (gamma), UreB (beta) and UreC (alpha) subunits. Three heterotrimers associate to form the active enzyme.

The protein localises to the cytoplasm. It carries out the reaction urea + 2 H2O + H(+) = hydrogencarbonate + 2 NH4(+). The protein operates within nitrogen metabolism; urea degradation; CO(2) and NH(3) from urea (urease route): step 1/1. The chain is Urease subunit gamma from Enterobacter sp. (strain 638).